A 182-amino-acid chain; its full sequence is Epididymal-specific lipocalin-10 (182 aa).

An N-terminal signal peptide occupies residues 1-19 (MKLEMALSIALALAVVSWT). N-linked (GlcNAc...) asparagine glycosylation is found at Asn-31 and Asn-144. The cysteines at positions 85 and 176 are disulfide-linked. Lys-165 is modified (N6-acetyllysine).

This sequence belongs to the calycin superfamily. Lipocalin family. Expressed in epididymis.

Its subcellular location is the secreted. In terms of biological role, may play a role in male fertility. May act as a retinoid carrier protein within the epididymis. The chain is Epididymal-specific lipocalin-10 (Lcn10) from Mus musculus (Mouse).